Here is a 335-residue protein sequence, read N- to C-terminus: Aliphatic sulfonates import ATP-binding protein SsuB (335 aa).

The disordered stretch occupies residues 48-71 (PFASGGAFGRAPRDDDDDRRGAGD). Positions 74–293 (VRLTRVSKRY…ARASAAFAEL (220 aa)) constitute an ABC transporter domain. 106-113 (GRSGCGKS) is an ATP binding site.

It belongs to the ABC transporter superfamily. Aliphatic sulfonates importer (TC 3.A.1.17.2) family. As to quaternary structure, the complex is composed of two ATP-binding proteins (SsuB), two transmembrane proteins (SsuC) and a solute-binding protein (SsuA).

The protein localises to the cell inner membrane. It carries out the reaction ATP + H2O + aliphatic sulfonate-[sulfonate-binding protein]Side 1 = ADP + phosphate + aliphatic sulfonateSide 2 + [sulfonate-binding protein]Side 1.. Functionally, part of the ABC transporter complex SsuABC involved in aliphatic sulfonates import. Responsible for energy coupling to the transport system. The polypeptide is Aliphatic sulfonates import ATP-binding protein SsuB (Burkholderia thailandensis (strain ATCC 700388 / DSM 13276 / CCUG 48851 / CIP 106301 / E264)).